The primary structure comprises 427 residues: MPIHIIDRRLNPGGKSLENRQRFLRRAKSLVQGAVKKTSQERDIKDVLEGGEVTIPLDGMHEPRFRREGGTRDMVLPGNKKFVEGDYLQRSGQGSAKDSGPGEGDSEDAFRFVLSRDEFVDLFLDDLELPDLAKRKIAQTESEGIQRAGYTTSGSPANISVSRTVKLALARRIALKRPRKDEIEELEAAIAACTDEDERVVLLAELEKLMAKTKRIPFIDPLDIRYRRFETVPKPVAQAVMFCLMDVSGSMSEHMKDLAKRFYMLLYVFLKRRYKHVEIVFIRHTDRAEEVDEQTFFYGPASGGTLVSSALQAMHDIVRERFNPSDWNIYAAQASDGDNSYSDGELTGLLLTDKILPVCQFFAYLEVGESGGSAFDLSDSSLWTLYERLRNSGAPLSMRKVSERSEIFPVFHDLFQRRETSQEKAAP.

The tract at residues 86 to 107 (DYLQRSGQGSAKDSGPGEGDSE) is disordered.

It belongs to the UPF0229 family.

This chain is UPF0229 protein bll6755, found in Bradyrhizobium diazoefficiens (strain JCM 10833 / BCRC 13528 / IAM 13628 / NBRC 14792 / USDA 110).